The primary structure comprises 422 residues: Probable isoprenylcysteine alpha-carbonyl methylesterase ICMEL2 (422 aa).

Residues 1–16 are compositionally biased toward basic and acidic residues; that stretch reads MQLSPERCRPMSENRE. A disordered region spans residues 1 to 55; it reads MQLSPERCRPMSENREAWSANSEEMELLHGSNRLSSPEHVRRRVSGNSSEDGSPR. 2 helical membrane passes run 97–117 and 152–172; these read LLAL…VAYL and VVVF…GSLL. Substrate-binding positions include 158–160 and 229–231; these read GGA and QSA. Active-site residues include serine 230, aspartate 331, and histidine 363.

The protein belongs to the AB hydrolase superfamily. Isoprenylcysteine methylesterase family. Expressed at low levels in flowers and siliques.

Its subcellular location is the endoplasmic reticulum membrane. The protein resides in the golgi apparatus membrane. It catalyses the reaction [protein]-C-terminal S-[(2E,6E)-farnesyl]-L-cysteine methyl ester + H2O = [protein]-C-terminal S-[(2E,6E)-farnesyl]-L-cysteine + methanol + H(+). Catalyzes the demethylation of isoprenylcysteine methylesters. May act as a negative regulator of ABA signaling. The polypeptide is Probable isoprenylcysteine alpha-carbonyl methylesterase ICMEL2 (Arabidopsis thaliana (Mouse-ear cress)).